The chain runs to 244 residues: Robin (244 aa).

The chain is Robin from Acanthamoeba polyphaga (Amoeba).